Consider the following 127-residue polypeptide: Large ribosomal subunit protein bL17 (127 aa).

This sequence belongs to the bacterial ribosomal protein bL17 family. In terms of assembly, part of the 50S ribosomal subunit. Contacts protein L32.

This chain is Large ribosomal subunit protein bL17, found in Pediococcus pentosaceus (strain ATCC 25745 / CCUG 21536 / LMG 10740 / 183-1w).